Here is a 100-residue protein sequence, read N- to C-terminus: Urease subunit gamma (100 aa).

This sequence belongs to the urease gamma subunit family. As to quaternary structure, heterotrimer of UreA (gamma), UreB (beta) and UreC (alpha) subunits. Three heterotrimers associate to form the active enzyme.

It is found in the cytoplasm. The enzyme catalyses urea + 2 H2O + H(+) = hydrogencarbonate + 2 NH4(+). Its pathway is nitrogen metabolism; urea degradation; CO(2) and NH(3) from urea (urease route): step 1/1. The polypeptide is Urease subunit gamma (Mycobacteroides abscessus (strain ATCC 19977 / DSM 44196 / CCUG 20993 / CIP 104536 / JCM 13569 / NCTC 13031 / TMC 1543 / L948) (Mycobacterium abscessus)).